Reading from the N-terminus, the 801-residue chain is Heavy metal tolerance factor 1 (801 aa).

At 1 to 24 (MGFSPFLDECRAEGLWPIGPSCNK) the chain is on the lumenal side. Residues 25 to 45 (IISFGVYTFFIVVNFIVLCIP) traverse the membrane as a helical segment. Residues 46-75 (NSNSANNNYRRMTDDDASSTSKLTISKILS) are Cytoplasmic-facing. A helical transmembrane segment spans residues 76–96 (ICTIFAVICQSIFYFCFTFYF). The Lumenal segment spans residues 97–101 (HPYTH). A helical transmembrane segment spans residues 102–122 (LLLAFCVSKLFFWILSLCSFS). Residues 123–129 (KWRNQPS) are Cytoplasmic-facing. A helical transmembrane segment spans residues 130-150 (TPISLAFAFSAALLIHCIPLT). Residues 151-167 (DWKKYFEPTSKNRGDLT) lie on the Lumenal side of the membrane. A helical membrane pass occupies residues 168–188 (FYIIELALVTVVFFFTIVTGL). At 189–226 (FNFSGCSSRESAWNNLSKKVVTVAPYIWPTKSISLQLR) the chain is on the cytoplasmic side. The chain crosses the membrane as a helical span at residues 227-247 (VVFCLFLLIIGRLINVSLPIL). The ABC transmembrane type-1 domain maps to 227 to 516 (VVFCLFLLII…FGTIYRVIQK (290 aa)). The Lumenal segment spans residues 248–264 (SKWIVDELATPDTFQYS). The chain crosses the membrane as a helical span at residues 265–285 (LLFLATFLKFLQGNGAMGGFL). Residues 286 to 341 (NTVRTYLWIPIQQYTTRELEVELFKHLHSLSLRWHLSRKTGQVLRVMDRGTSSVNN) are Cytoplasmic-facing. Residues 342 to 364 (ILNYILFNVVPTIADIVIAVIFF) form a helical membrane-spanning segment. At 365–371 (FSAFNAY) the chain is on the lumenal side. A helical membrane pass occupies residues 372-390 (FGLIVFGTMALYLTVTISI). Residues 391–461 (TEWRTQYIRE…SLAFLNCLQN (71 aa)) lie on the Cytoplasmic side of the membrane. The chain crosses the membrane as a helical span at residues 462 to 482 (AIIGIGMIGGSVFVVYMIVHE). Residues 483 to 489 (KTLTVGD) are Lumenal-facing. The helical transmembrane segment at 490–510 (YVLFTTYLLQLYTPLNFFGTI) threads the bilayer. Residues 511 to 801 (YRVIQKAFVD…KSIELGEELP (291 aa)) lie on the Cytoplasmic side of the membrane. In terms of domain architecture, ABC transporter spans 550–784 (ISVKNLTFEY…QGTYASMWEA (235 aa)). ATP is bound at residue 583–590 (GSSGSGKS).

This sequence belongs to the ABC transporter superfamily. ABCB family. Heavy Metal importer (TC 3.A.1.210) subfamily. As to expression, expressed in coelomocytes, as well as in head and tail neurons, and in the intestinal cells.

The protein localises to the vacuole membrane. Its subcellular location is the early endosome. The protein resides in the late endosome. It localises to the recycling endosome. Its function is as follows. May play a pivotal role in the detoxification of heavy metals such as cadmium but do not depend exclusively on phytochelatins (PC) synthesis. In Caenorhabditis elegans, this protein is Heavy metal tolerance factor 1.